A 334-amino-acid chain; its full sequence is Pantothenate synthetase (334 aa).

Position 34–41 (34–41 (MGALHEGH)) interacts with ATP. The Proton donor role is filled by His41. Gln71 is a binding site for (R)-pantoate. Gln71 is a binding site for beta-alanine. Residue 158 to 161 (GQKD) participates in ATP binding. Position 164 (Gln164) interacts with (R)-pantoate. ATP is bound by residues Val187 and 195-198 (LSSR). A disordered region spans residues 288-334 (PLMLGTRGPAGEASPPNRERSEPGSAEQNKSPGEARTTPSGTSEASE). The segment covering 313–334 (AEQNKSPGEARTTPSGTSEASE) has biased composition (polar residues).

This sequence belongs to the pantothenate synthetase family. As to quaternary structure, homodimer.

Its subcellular location is the cytoplasm. It carries out the reaction (R)-pantoate + beta-alanine + ATP = (R)-pantothenate + AMP + diphosphate + H(+). The protein operates within cofactor biosynthesis; (R)-pantothenate biosynthesis; (R)-pantothenate from (R)-pantoate and beta-alanine: step 1/1. Functionally, catalyzes the condensation of pantoate with beta-alanine in an ATP-dependent reaction via a pantoyl-adenylate intermediate. This is Pantothenate synthetase from Nocardioides sp. (strain ATCC BAA-499 / JS614).